The following is a 467-amino-acid chain: MTRGAWMCRQYDDGLKIWLAAPRENEKPFIDSERAQKWRLSLASLLFFTVLLSDHLWFCAEAKLTRTRDKEHHQQQQQQQQQQQQQQQQQQQQQQRQQQRQRQQQRQRQQEPSWPALLASMGESSPAAQAHRLLSASSSPTLPPSPGGGGGSKGNRGKNNRSRALFLGNSAKPVWRLETCYPQGASSGQCFTVESADAVCARNWSRGAAAGEEQSSRGSRPTPLWNLSDFYLSFCNSYTLWELFSGLSSPSTLNCSLDVVLTEGGEMTTCRQCIEAYQDYDHHAQEKYEEFESVLHKYLQSDEYSVKSCPEDCKIVYKAWLCSQYFEVTQFNCRKTIPCKQYCLEVQTRCPFILPDNDEVIYGGLSSFICTGLYETFLTNDEPECCDIRSEEQTAPRPKGTVDRRDSCPRTSLTVSSATRLCPGRLKLCVLVLILLHTVLTASAAQNSTGLGLGGLPTLEDNSTRED.

A helical membrane pass occupies residues 40 to 60 (LSLASLLFFTVLLSDHLWFCA). The tract at residues 121 to 161 (MGESSPAAQAHRLLSASSSPTLPPSPGGGGGSKGNRGKNNR) is disordered. Asn160, Asn226, and Asn254 each carry an N-linked (GlcNAc...) asparagine glycan. Intrachain disulfides connect Cys200/Cys270, Cys235/Cys322, Cys255/Cys270, Cys313/Cys350, Cys333/Cys386, Cys339/Cys385, and Cys343/Cys370. Over residues 390–408 (SEEQTAPRPKGTVDRRDSC) the composition is skewed to basic and acidic residues. The tract at residues 390–409 (SEEQTAPRPKGTVDRRDSCP) is disordered. The helical transmembrane segment at 426–446 (LKLCVLVLILLHTVLTASAAQ) threads the bilayer. Asn462 carries N-linked (GlcNAc...) asparagine glycosylation.

Belongs to the NALF family. As to quaternary structure, component of the NALCN channel complex. NALCN complex consists of NALCN and auxiliary subunits, UNC79, UNC80 and NACL1. These auxiliary subunits are essential for the NALCN channel function.

Its subcellular location is the cell membrane. Auxillary component of the NALCN sodium channel complex, a channel that regulates the resting membrane potential and controls neuronal excitability. This chain is NALCN channel auxiliary factor 1, found in Mus musculus (Mouse).